Here is a 239-residue protein sequence, read N- to C-terminus: Ubiquinone biosynthesis O-methyltransferase (239 aa).

4 residues coordinate S-adenosyl-L-methionine: R45, G64, D85, and M129.

The protein belongs to the methyltransferase superfamily. UbiG/COQ3 family.

It carries out the reaction a 3-demethylubiquinol + S-adenosyl-L-methionine = a ubiquinol + S-adenosyl-L-homocysteine + H(+). The catalysed reaction is a 3-(all-trans-polyprenyl)benzene-1,2-diol + S-adenosyl-L-methionine = a 2-methoxy-6-(all-trans-polyprenyl)phenol + S-adenosyl-L-homocysteine + H(+). Its pathway is cofactor biosynthesis; ubiquinone biosynthesis. Functionally, O-methyltransferase that catalyzes the 2 O-methylation steps in the ubiquinone biosynthetic pathway. The sequence is that of Ubiquinone biosynthesis O-methyltransferase from Nitrosospira multiformis (strain ATCC 25196 / NCIMB 11849 / C 71).